We begin with the raw amino-acid sequence, 597 residues long: Formate--tetrahydrofolate ligase (597 aa).

Position 84–91 (84–91 (TPLGEGKS)) interacts with ATP.

This sequence belongs to the formate--tetrahydrofolate ligase family.

The catalysed reaction is (6S)-5,6,7,8-tetrahydrofolate + formate + ATP = (6R)-10-formyltetrahydrofolate + ADP + phosphate. It participates in one-carbon metabolism; tetrahydrofolate interconversion. The sequence is that of Formate--tetrahydrofolate ligase from Dehalococcoides mccartyi (strain CBDB1).